A 35-amino-acid polypeptide reads, in one-letter code: MEVNILAVIATALFIIIPTSFLLILYVKTASQADS.

A helical membrane pass occupies residues 5-25 (ILAVIATALFIIIPTSFLLIL).

Belongs to the PsbM family. As to quaternary structure, PSII is composed of 1 copy each of membrane proteins PsbA, PsbB, PsbC, PsbD, PsbE, PsbF, PsbH, PsbI, PsbJ, PsbK, PsbL, PsbM, PsbT, PsbX, PsbY, PsbZ, Psb30/Ycf12, at least 3 peripheral proteins of the oxygen-evolving complex and a large number of cofactors. It forms dimeric complexes.

The protein resides in the plastid. The protein localises to the chloroplast thylakoid membrane. In terms of biological role, one of the components of the core complex of photosystem II (PSII). PSII is a light-driven water:plastoquinone oxidoreductase that uses light energy to abstract electrons from H(2)O, generating O(2) and a proton gradient subsequently used for ATP formation. It consists of a core antenna complex that captures photons, and an electron transfer chain that converts photonic excitation into a charge separation. This subunit is found at the monomer-monomer interface. In Staurastrum punctulatum (Green alga), this protein is Photosystem II reaction center protein M.